Reading from the N-terminus, the 256-residue chain is Pimeloyl-[acyl-carrier protein] methyl ester esterase (256 aa).

The region spanning 15–242 (HLVLLHGWGL…AAHAPFISHP (228 aa)) is the AB hydrolase-1 domain. Residues W22, 82–83 (SL), and 143–147 (FLALQ) each bind substrate. Catalysis depends on S82, which acts as the Nucleophile. Active-site residues include D207 and H235. A substrate-binding site is contributed by H235.

Belongs to the AB hydrolase superfamily. Carboxylesterase BioH family. As to quaternary structure, monomer.

The protein resides in the cytoplasm. It carries out the reaction 6-carboxyhexanoyl-[ACP] methyl ester + H2O = 6-carboxyhexanoyl-[ACP] + methanol + H(+). It participates in cofactor biosynthesis; biotin biosynthesis. The physiological role of BioH is to remove the methyl group introduced by BioC when the pimeloyl moiety is complete. It allows to synthesize pimeloyl-ACP via the fatty acid synthetic pathway through the hydrolysis of the ester bonds of pimeloyl-ACP esters. The chain is Pimeloyl-[acyl-carrier protein] methyl ester esterase from Salmonella dublin (strain CT_02021853).